The sequence spans 569 residues: 2-succinyl-5-enolpyruvyl-6-hydroxy-3-cyclohexene-1-carboxylate synthase (569 aa).

It belongs to the TPP enzyme family. MenD subfamily. In terms of assembly, homodimer. Requires Mg(2+) as cofactor. Mn(2+) is required as a cofactor. The cofactor is thiamine diphosphate.

It carries out the reaction isochorismate + 2-oxoglutarate + H(+) = 5-enolpyruvoyl-6-hydroxy-2-succinyl-cyclohex-3-ene-1-carboxylate + CO2. Its pathway is quinol/quinone metabolism; 1,4-dihydroxy-2-naphthoate biosynthesis; 1,4-dihydroxy-2-naphthoate from chorismate: step 2/7. It participates in quinol/quinone metabolism; menaquinone biosynthesis. Functionally, catalyzes the thiamine diphosphate-dependent decarboxylation of 2-oxoglutarate and the subsequent addition of the resulting succinic semialdehyde-thiamine pyrophosphate anion to isochorismate to yield 2-succinyl-5-enolpyruvyl-6-hydroxy-3-cyclohexene-1-carboxylate (SEPHCHC). The protein is 2-succinyl-5-enolpyruvyl-6-hydroxy-3-cyclohexene-1-carboxylate synthase of Paenarthrobacter aurescens (strain TC1).